Reading from the N-terminus, the 223-residue chain is Ribonuclease T (223 aa).

Positions 20 to 194 (VVIDVETAGF…YDTERTAELF (175 aa)) constitute an Exonuclease domain. Residues Asp23, Glu25, His181, and Asp186 each coordinate Mg(2+). The active-site Proton donor/acceptor is His181.

This sequence belongs to the RNase T family. Homodimer. The cofactor is Mg(2+).

In terms of biological role, trims short 3' overhangs of a variety of RNA species, leaving a one or two nucleotide 3' overhang. Responsible for the end-turnover of tRNA: specifically removes the terminal AMP residue from uncharged tRNA (tRNA-C-C-A). Also appears to be involved in tRNA biosynthesis. This is Ribonuclease T from Shewanella baltica (strain OS155 / ATCC BAA-1091).